A 600-amino-acid polypeptide reads, in one-letter code: Proline--tRNA ligase (600 aa).

This sequence belongs to the class-II aminoacyl-tRNA synthetase family. ProS type 1 subfamily. In terms of assembly, homodimer.

It is found in the cytoplasm. It catalyses the reaction tRNA(Pro) + L-proline + ATP = L-prolyl-tRNA(Pro) + AMP + diphosphate. Catalyzes the attachment of proline to tRNA(Pro) in a two-step reaction: proline is first activated by ATP to form Pro-AMP and then transferred to the acceptor end of tRNA(Pro). As ProRS can inadvertently accommodate and process non-cognate amino acids such as alanine and cysteine, to avoid such errors it has two additional distinct editing activities against alanine. One activity is designated as 'pretransfer' editing and involves the tRNA(Pro)-independent hydrolysis of activated Ala-AMP. The other activity is designated 'posttransfer' editing and involves deacylation of mischarged Ala-tRNA(Pro). The misacylated Cys-tRNA(Pro) is not edited by ProRS. This chain is Proline--tRNA ligase, found in Prochlorococcus marinus subsp. pastoris (strain CCMP1986 / NIES-2087 / MED4).